The chain runs to 181 residues: Large ribosomal subunit protein uL16 (181 aa).

Belongs to the universal ribosomal protein uL16 family.

In Pyrococcus horikoshii (strain ATCC 700860 / DSM 12428 / JCM 9974 / NBRC 100139 / OT-3), this protein is Large ribosomal subunit protein uL16.